The following is a 113-amino-acid chain: ATP-dependent Clp protease adapter protein ClpS (113 aa).

It belongs to the ClpS family. In terms of assembly, binds to the N-terminal domain of the chaperone ClpA.

Its function is as follows. Involved in the modulation of the specificity of the ClpAP-mediated ATP-dependent protein degradation. The polypeptide is ATP-dependent Clp protease adapter protein ClpS (Corynebacterium diphtheriae (strain ATCC 700971 / NCTC 13129 / Biotype gravis)).